Reading from the N-terminus, the 606-residue chain is ATP-dependent rRNA helicase spb4 (606 aa).

Residues 1–29 (MSFQSINIDKWLKNAVAAQGFKKMTPVQA) carry the Q motif motif. The Helicase ATP-binding domain occupies 32-213 (IPLFLKNKDL…KIAGLRNSVR (182 aa)). 45-52 (AVTGSGKT) lines the ATP pocket. The DEAD box motif lies at 161-164 (DEAD). The Helicase C-terminal domain maps to 246 to 400 (CMIHLLCTIE…ALDLSRLKVL (155 aa)). The interval 521–574 (KQKEVKEKRNTRREKRKSKKEFLKAQKNEASNNLKQEIVSKAGAQETENDDLID) is disordered. Positions 521-601 (KQKEVKEKRN…KSKKRKNQAS (81 aa)) form a coiled coil. A compositionally biased stretch (basic residues) spans 529-539 (RNTRREKRKSK).

The protein belongs to the DEAD box helicase family. DDX55/SPB4 subfamily. As to quaternary structure, component of pre-60S ribosomal complexes.

It is found in the nucleus. The protein localises to the nucleolus. It carries out the reaction ATP + H2O = ADP + phosphate + H(+). ATP-binding RNA helicase involved in the biogenesis of 60S ribosomal subunits. Binds 90S pre-ribosomal particles and dissociates from pre-60S ribosomal particles after processing of 27SB pre-rRNA. Required for the normal formation of 18S rRNA through the processing of pre-rRNAs at sites A0, A1 and A2, and the normal formation of 25S and 5.8S rRNAs through the processing of pre-rRNAs at sites C1 and C2. The protein is ATP-dependent rRNA helicase spb4 of Schizosaccharomyces pombe (strain 972 / ATCC 24843) (Fission yeast).